Consider the following 322-residue polypeptide: MPVTVTRTTITTTTTSSSGLGSPMIVGSPRALTQPLGLLRLLQLVSTCVAFSLVASVGAWTGSMGNWSMFTWCFCFSVTLIILIVELCGLQARFPLSWRNFPITFACYAALFCLSASIIYPTTYVQFLSHGRSRDHAIAATFFSCIACVAYATEVAWTRARPGEITGYMATVPGLLKVLETFVACIIFAFISDPNLYQHQPALEWCVAVYAICFILAAIAILLNLGECTNVLPIPFPSFLSGLALLSVLLYATALVLWPLYQFDEKYGGQPRRSRDVSCSRSHAYYVCAWDRRLAVAILTAINLLAYVADLVHSAHLVFVKV.

The segment covering 1–18 has biased composition (low complexity); that stretch reads MPVTVTRTTITTTTTSSS. The tract at residues 1-21 is disordered; it reads MPVTVTRTTITTTTTSSSGLG. Serine 22 carries the phosphoserine modification. MARVEL domains are found at residues 31–163 and 168–319; these read ALTQ…ARPG and YMAT…HLVF. The next 8 membrane-spanning stretches (helical) occupy residues 41 to 61, 70 to 90, 101 to 121, 137 to 157, 171 to 191, 203 to 223, 239 to 259, and 294 to 314; these read LLQL…GAWT, FTWC…LCGL, FPIT…IIYP, AIAA…EVAW, TVPG…FAFI, LEWC…AILL, FLSG…VLWP, and LAVA…LVHS.

The protein belongs to the MAL family. Widely expressed. Not detected in thymus.

The protein resides in the membrane. The sequence is that of Myeloid-associated differentiation marker (MYADM) from Homo sapiens (Human).